The sequence spans 96 residues: Small ribosomal subunit protein bS20 (96 aa).

The segment at Met-1–Arg-27 is disordered.

The protein belongs to the bacterial ribosomal protein bS20 family.

Binds directly to 16S ribosomal RNA. The sequence is that of Small ribosomal subunit protein bS20 from Protochlamydia amoebophila (strain UWE25).